The sequence spans 155 residues: Large ribosomal subunit protein bL17 (155 aa).

This sequence belongs to the bacterial ribosomal protein bL17 family. In terms of assembly, part of the 50S ribosomal subunit. Contacts protein L32.

The sequence is that of Large ribosomal subunit protein bL17 from Syntrophotalea carbinolica (strain DSM 2380 / NBRC 103641 / GraBd1) (Pelobacter carbinolicus).